The following is a 226-amino-acid chain: Late protein I226R (226 aa).

The signal sequence occupies residues 1 to 16; that stretch reads MKMETFLVCLFHNADG. 2 N-linked (GlcNAc...) asparagine; by host glycosylation sites follow: asparagine 142 and asparagine 164.

It belongs to the asfivirus I226R family.

Its function is as follows. Plays a role in the inhibition of host NF-kappa-B and IRF3 signaling pathways. Mechanistically, promotes the degradation of host IKBKG through enhancing its ubiquitination leading to inhibition of both pathways. The sequence is that of Late protein I226R from African swine fever virus (isolate Tick/South Africa/Pretoriuskop Pr4/1996) (ASFV).